Here is a 312-residue protein sequence, read N- to C-terminus: Deoxyribonuclease-1-like 1 (312 aa).

A signal peptide spans 1–35 (MPSGQPVFPRRVPDAYIAMRGLVVASLLILLVGGT). N-linked (GlcNAc...) asparagine glycosylation occurs at asparagine 102. Residue glutamate 113 is part of the active site. N-linked (GlcNAc...) asparagine glycosylation occurs at asparagine 133. Residue histidine 164 is part of the active site. A disulfide bridge links cysteine 203 with cysteine 240. Residue asparagine 239 is glycosylated (N-linked (GlcNAc...) asparagine).

It belongs to the DNase I family.

Its subcellular location is the endoplasmic reticulum. The polypeptide is Deoxyribonuclease-1-like 1 (Dnase1l1) (Rattus norvegicus (Rat)).